We begin with the raw amino-acid sequence, 142 residues long: uncharacterized protein (142 aa).

Its subcellular location is the mitochondrion. This is an uncharacterized protein from Mus musculus (Mouse).